Consider the following 145-residue polypeptide: 3-hydroxyacyl-[acyl-carrier-protein] dehydratase FabZ (145 aa).

The active site involves His47.

It belongs to the thioester dehydratase family. FabZ subfamily.

The protein localises to the cytoplasm. It carries out the reaction a (3R)-hydroxyacyl-[ACP] = a (2E)-enoyl-[ACP] + H2O. Involved in unsaturated fatty acids biosynthesis. Catalyzes the dehydration of short chain beta-hydroxyacyl-ACPs and long chain saturated and unsaturated beta-hydroxyacyl-ACPs. This Polaromonas naphthalenivorans (strain CJ2) protein is 3-hydroxyacyl-[acyl-carrier-protein] dehydratase FabZ.